We begin with the raw amino-acid sequence, 313 residues long: Methionyl-tRNA formyltransferase (313 aa).

109-112 (SLLP) provides a ligand contact to (6S)-5,6,7,8-tetrahydrofolate.

Belongs to the Fmt family.

The enzyme catalyses L-methionyl-tRNA(fMet) + (6R)-10-formyltetrahydrofolate = N-formyl-L-methionyl-tRNA(fMet) + (6S)-5,6,7,8-tetrahydrofolate + H(+). Attaches a formyl group to the free amino group of methionyl-tRNA(fMet). The formyl group appears to play a dual role in the initiator identity of N-formylmethionyl-tRNA by promoting its recognition by IF2 and preventing the misappropriation of this tRNA by the elongation apparatus. The polypeptide is Methionyl-tRNA formyltransferase (Thermotoga sp. (strain RQ2)).